The following is a 590-amino-acid chain: uncharacterized protein (590 aa).

The Cytoplasmic portion of the chain corresponds to 1-68; the sequence is MKFSKPKFSM…SQRVWGPWNY (68 aa). Residues 69-89 traverse the membrane as a helical segment; the sequence is VAFWLADSVNVNTWMIAGTAV. At 90 to 94 the chain is on the extracellular side; the sequence is ESGLS. A helical membrane pass occupies residues 95–115; it reads WWEAWITVWVGYTIAAFILTI. The Cytoplasmic segment spans residues 116–124; it reads AGRAGAVYH. The helical transmembrane segment at 125 to 145 threads the bilayer; it reads ISFPVLSRSSFGIWGSLWPIL. Over 146 to 149 the chain is Extracellular; sequence NRAV. A helical transmembrane segment spans residues 150-170; that stretch reads MACVWYGVQAWIGGECVTLMI. Residues 171–194 are Cytoplasmic-facing; sequence RSIWPSFSHIPNTMAKSGTETYQW. Residues 195–215 form a helical membrane-spanning segment; that stretch reads VGFFIFWLISNVAIWFPVYQI. At 216–218 the chain is on the extracellular side; sequence RHL. A helical membrane pass occupies residues 219–239; it reads FTAKSFLAPPAAIAFLIWALV. Residues 240–258 are Cytoplasmic-facing; the sequence is KAHGAGDAIHAKTQLSTWN. Residues 259-279 form a helical membrane-spanning segment; that stretch reads HGWAVTAGIISCLDNFATLIV. Residues 280–298 are Extracellular-facing; that stretch reads NNPDFTRFATTPNAPIFPQ. Residues 299–319 traverse the membrane as a helical segment; sequence LITIPMGFGITTLIGVLVGSA. The Cytoplasmic segment spans residues 320–390; that stretch reads SKSIYGENIW…LCPMFINIRR (71 aa). A helical transmembrane segment spans residues 391–411; sequence GGYIASIIGICMCPWNLLSSS. The Extracellular segment spans residues 412 to 418; it reads NSFANSL. The chain crosses the membrane as a helical span at residues 419 to 439; the sequence is SAYAVFLSSFAGILIADYFVI. Topologically, residues 440–467 are cytoplasmic; the sequence is RKGYLKVDALYTINPNEPYWFTYGINLR. Residues 468 to 488 form a helical membrane-spanning segment; that stretch reads AFASYICGLLINVVGLAGAVG. At 489 to 500 the chain is on the extracellular side; the sequence is DKVPKAALTMNN. A helical transmembrane segment spans residues 501-521; the sequence is IAYLLGIVTSFLSHLIICKIF. Residues 522–590 are Cytoplasmic-facing; the sequence is PVTACGEKFL…GIDIKESSVF (69 aa). The segment at 566 to 590 is disordered; the sequence is VSYDSKEKSDDGKSGGIDIKESSVF.

Belongs to the purine-cytosine permease (2.A.39) family.

The protein resides in the cytoplasm. Its subcellular location is the nucleus. It localises to the membrane. This is an uncharacterized protein from Schizosaccharomyces pombe (strain 972 / ATCC 24843) (Fission yeast).